A 513-amino-acid polypeptide reads, in one-letter code: ATP synthase subunit alpha (513 aa).

An ATP-binding site is contributed by 169 to 176 (GDRQTGKT).

It belongs to the ATPase alpha/beta chains family. In terms of assembly, F-type ATPases have 2 components, CF(1) - the catalytic core - and CF(0) - the membrane proton channel. CF(1) has five subunits: alpha(3), beta(3), gamma(1), delta(1), epsilon(1). CF(0) has three main subunits: a(1), b(2) and c(9-12). The alpha and beta chains form an alternating ring which encloses part of the gamma chain. CF(1) is attached to CF(0) by a central stalk formed by the gamma and epsilon chains, while a peripheral stalk is formed by the delta and b chains.

The protein resides in the cell inner membrane. It catalyses the reaction ATP + H2O + 4 H(+)(in) = ADP + phosphate + 5 H(+)(out). Produces ATP from ADP in the presence of a proton gradient across the membrane. The alpha chain is a regulatory subunit. This chain is ATP synthase subunit alpha, found in Shewanella sp. (strain ANA-3).